A 154-amino-acid polypeptide reads, in one-letter code: Protein FasC (154 aa).

Belongs to the periplasmic pilus chaperone family.

In terms of biological role, could be required for the biogenesis of a putative fimbria. The sequence is that of Protein FasC (fasC) from Escherichia coli.